Consider the following 336-residue polypeptide: Dihydroorotate dehydrogenase (quinone) (336 aa).

FMN contacts are provided by residues 62–66 and Thr86; that span reads AGLDK. Lys66 is a binding site for substrate. Residue 111–115 coordinates substrate; it reads NRFGF. FMN is bound by residues Asn139 and Asn172. Asn172 provides a ligand contact to substrate. The active-site Nucleophile is Ser175. Position 177 (Asn177) interacts with substrate. The FMN site is built by Lys217 and Thr245. 246-247 contacts substrate; it reads NT. FMN is bound by residues Gly268, Gly297, and 318-319; that span reads YS.

It belongs to the dihydroorotate dehydrogenase family. Type 2 subfamily. As to quaternary structure, monomer. Requires FMN as cofactor.

Its subcellular location is the cell membrane. The catalysed reaction is (S)-dihydroorotate + a quinone = orotate + a quinol. The protein operates within pyrimidine metabolism; UMP biosynthesis via de novo pathway; orotate from (S)-dihydroorotate (quinone route): step 1/1. In terms of biological role, catalyzes the conversion of dihydroorotate to orotate with quinone as electron acceptor. The polypeptide is Dihydroorotate dehydrogenase (quinone) (Photobacterium profundum (strain SS9)).